A 180-amino-acid chain; its full sequence is Acireductone dioxygenase (180 aa).

Residues H99, H101, E105, and H145 each coordinate Fe(2+). Positions 99, 101, 105, and 145 each coordinate Ni(2+).

It belongs to the acireductone dioxygenase (ARD) family. Monomer. Fe(2+) is required as a cofactor. Ni(2+) serves as cofactor.

It carries out the reaction 1,2-dihydroxy-5-(methylsulfanyl)pent-1-en-3-one + O2 = 3-(methylsulfanyl)propanoate + CO + formate + 2 H(+). The catalysed reaction is 1,2-dihydroxy-5-(methylsulfanyl)pent-1-en-3-one + O2 = 4-methylsulfanyl-2-oxobutanoate + formate + 2 H(+). It participates in amino-acid biosynthesis; L-methionine biosynthesis via salvage pathway; L-methionine from S-methyl-5-thio-alpha-D-ribose 1-phosphate: step 5/6. In terms of biological role, catalyzes 2 different reactions between oxygen and the acireductone 1,2-dihydroxy-3-keto-5-methylthiopentene (DHK-MTPene) depending upon the metal bound in the active site. Fe-containing acireductone dioxygenase (Fe-ARD) produces formate and 2-keto-4-methylthiobutyrate (KMTB), the alpha-ketoacid precursor of methionine in the methionine recycle pathway. Ni-containing acireductone dioxygenase (Ni-ARD) produces methylthiopropionate, carbon monoxide and formate, and does not lie on the methionine recycle pathway. This chain is Acireductone dioxygenase, found in Geobacillus kaustophilus (strain HTA426).